The sequence spans 57 residues: Protein new-glue 4 (57 aa).

The N-terminal stretch at 1-16 is a signal peptide; the sequence is MEWKLLLIVLPWLLVC.

The protein localises to the secreted. The chain is Protein new-glue 4 (ng4) from Drosophila melanogaster (Fruit fly).